Reading from the N-terminus, the 495-residue chain is Alkaline protease 2 (495 aa).

Positions 1-16 are cleaved as a signal peptide; that stretch reads MKGYLSLSILPLLVAA. The propeptide occupies 17-136; the sequence is SPVVVDSIHN…IEKDSEVHTM (120 aa). Positions 43–136 constitute an Inhibitor I9 domain; sequence SYIVVFKKHV…IEKDSEVHTM (94 aa). A Peptidase S8 domain is found at 146–452; it reads PWGLARISHR…GGSSNYTDII (307 aa). Catalysis depends on charge relay system residues Asp182 and His214. A glycan (N-linked (GlcNAc...) asparagine) is linked at Asn284. The active-site Charge relay system is Ser380. 2 N-linked (GlcNAc...) asparagine glycosylation sites follow: Asn447 and Asn460.

Belongs to the peptidase S8 family.

It carries out the reaction Hydrolysis of proteins with broad specificity, and of Bz-Arg-OEt &gt; Ac-Tyr-OEt. Does not hydrolyze peptide amides.. Functionally, alkaline protease that allows assimilation of proteinaceous substrates. Acts as a significant virulence factor in invasive aspergillosis. Required for regular sporulation. The chain is Alkaline protease 2 (alp2) from Aspergillus fumigatus (strain CBS 144.89 / FGSC A1163 / CEA10) (Neosartorya fumigata).